Consider the following 670-residue polypeptide: DNA ligase (670 aa).

NAD(+) is bound by residues 32 to 36, 81 to 82, and Glu114; these read DSEYD and SL. Catalysis depends on Lys116, which acts as the N6-AMP-lysine intermediate. 4 residues coordinate NAD(+): Arg137, Glu174, Lys291, and Lys315. Zn(2+)-binding residues include Cys409, Cys412, Cys427, and Cys433. Residues 592-670 enclose the BRCT domain; sequence ASENLFKDKT…EEEFLAQITR (79 aa).

Belongs to the NAD-dependent DNA ligase family. LigA subfamily. Mg(2+) is required as a cofactor. The cofactor is Mn(2+).

It carries out the reaction NAD(+) + (deoxyribonucleotide)n-3'-hydroxyl + 5'-phospho-(deoxyribonucleotide)m = (deoxyribonucleotide)n+m + AMP + beta-nicotinamide D-nucleotide.. Functionally, DNA ligase that catalyzes the formation of phosphodiester linkages between 5'-phosphoryl and 3'-hydroxyl groups in double-stranded DNA using NAD as a coenzyme and as the energy source for the reaction. It is essential for DNA replication and repair of damaged DNA. This chain is DNA ligase, found in Haemophilus influenzae (strain ATCC 51907 / DSM 11121 / KW20 / Rd).